Consider the following 118-residue polypeptide: MSGGSLINSIAINTRIKKIKKSLLQNYTKEKTDMIKILYLLSTPKIVIKNNGCFEKHYTICNFISKNQQNLNENNLNFHLNGYDKYEYLSNNDKNACTCINMDFIVERLMISSEHMTV.

This is an uncharacterized protein from Invertebrate iridescent virus 6 (IIV-6).